Reading from the N-terminus, the 141-residue chain is Eukaryotic translation initiation factor 1A (141 aa).

Residues Met1 to Gly15 show a composition bias toward basic residues. A disordered region spans residues Met1 to Lys28. The segment covering Lys16–Lys28 has biased composition (basic and acidic residues). The S1-like domain occupies Gln21–Asn95.

The protein belongs to the eIF-1A family.

In terms of biological role, seems to be required for maximal rate of protein biosynthesis. Enhances ribosome dissociation into subunits and stabilizes the binding of the initiator Met-tRNA(I) to 40 S ribosomal subunits. This is Eukaryotic translation initiation factor 1A (eif1a) from Dictyostelium discoideum (Social amoeba).